The chain runs to 388 residues: Galactokinase (388 aa).

33-36 is a binding site for substrate; that stretch reads EHTD. ATP is bound by residues Ser67 and 125-131; that span reads GAGLSSS. Mg(2+)-binding residues include Ser131 and Glu163. The active-site Proton acceptor is the Asp175. Tyr225 provides a ligand contact to substrate.

It belongs to the GHMP kinase family. GalK subfamily.

It localises to the cytoplasm. It catalyses the reaction alpha-D-galactose + ATP = alpha-D-galactose 1-phosphate + ADP + H(+). It functions in the pathway carbohydrate metabolism; galactose metabolism. Its function is as follows. Catalyzes the transfer of the gamma-phosphate of ATP to D-galactose to form alpha-D-galactose-1-phosphate (Gal-1-P). The chain is Galactokinase from Limosilactobacillus fermentum (strain NBRC 3956 / LMG 18251) (Lactobacillus fermentum).